The chain runs to 884 residues: Probable ribonuclease ZC3H12C (884 aa).

Residues 66–108 are disordered; the sequence is KPTMDTVNSGKEGKGVSEENVSSGDSEGSTSSDHESEQLSSLS. Positions 87–96 are enriched in low complexity; the sequence is SSGDSEGSTS. Position 231 is a phosphoserine (Ser231). Residues 246 to 401 enclose the RNase NYN domain; sequence LRPVVIDGSN…LGRHGPSLDN (156 aa). The segment at 411 to 436 adopts a C3H1-type zinc-finger fold; the sequence is EHKKQPCPYGKKCTYGHKCKYYHPER. A compositionally biased stretch (polar residues) spans 456-478; sequence AAKTTNEGGLVKSNSVPCSTKAD. Disordered regions lie at residues 456-548, 716-739, and 755-776; these read AAKT…SGVH, VGAR…KAPH, and SRLY…EGLG. Residues 500-516 show a composition bias toward basic and acidic residues; sequence VYQDIEEKLPTKNKLET. A compositionally biased stretch (polar residues) spans 518 to 543; that stretch reads SVPSLVSIPATSTAKPQSTTPLSNGL.

It belongs to the ZC3H12 family. Requires Mg(2+) as cofactor.

Its function is as follows. May function as RNase and regulate the levels of target RNA species. The polypeptide is Probable ribonuclease ZC3H12C (Zc3h12c) (Mus musculus (Mouse)).